A 183-amino-acid polypeptide reads, in one-letter code: Putative 3-methyladenine DNA glycosylase (183 aa).

This sequence belongs to the DNA glycosylase MPG family.

The sequence is that of Putative 3-methyladenine DNA glycosylase from Rickettsia peacockii (strain Rustic).